A 273-amino-acid polypeptide reads, in one-letter code: MAIVKCKPTSAGRRHVVKIVNPELHKGKPYAPLLDTKSKTGGRNNLGRITTRHIGGGHKQHYRLIDFKRNKLDIPAVVERLEYDPNRSANIALVLYKDGERRYILAPKGLSAGDQIQAGVNAPIKVGNALPMRNIPVGSTVHNVELKPGKGGQIARSAGSYVQIIAREGNYVTLRLRSGEMRKVLAECTATIGEVGNSEHMLRVLGKAGANRWRGVRPTVRGTAMNPVDHPHGGGEGRNFGKHPVSPWGVQTKGKKTRHNKRTDKYIVRRRGK.

A disordered region spans residues 221 to 273; sequence RGTAMNPVDHPHGGGEGRNFGKHPVSPWGVQTKGKKTRHNKRTDKYIVRRRGK. Over residues 253–273 the composition is skewed to basic residues; that stretch reads KGKKTRHNKRTDKYIVRRRGK.

Belongs to the universal ribosomal protein uL2 family. Part of the 50S ribosomal subunit. Forms a bridge to the 30S subunit in the 70S ribosome.

One of the primary rRNA binding proteins. Required for association of the 30S and 50S subunits to form the 70S ribosome, for tRNA binding and peptide bond formation. It has been suggested to have peptidyltransferase activity; this is somewhat controversial. Makes several contacts with the 16S rRNA in the 70S ribosome. The chain is Large ribosomal subunit protein uL2 from Mannheimia succiniciproducens (strain KCTC 0769BP / MBEL55E).